The following is a 905-amino-acid chain: FIGNL1-interacting regulator of recombination and mitosis (905 aa).

Phosphoserine occurs at positions 101 and 796. Lys-845 carries the N6-acetyllysine modification.

Interacts (via its N-terminal region) with PLK1; controls PLK1 kinase activity. Interacts (via the KVVXF motif) with PPP1CC; controls PLK1 kinase activity. Interacts with FIGNL1; may regulate homologous recombination. Phosphorylation at Ser-101 by PLK1 strengthens FIRRM-PLK1 interaction. Phosphorylation at Ser-796 by PLK1 negatively regulates its interaction with PPP1CC.

It localises to the chromosome. It is found in the centromere. The protein localises to the kinetochore. Its subcellular location is the nucleus. The protein resides in the midbody. It localises to the cytoplasm. It is found in the cytoskeleton. The protein localises to the spindle. Regulates PLK1 kinase activity at kinetochores and promotes faithful chromosome segregation in prometaphase by bridging kinase and phosphatase activities. Phosphorylation of FIRRM by PLK1 negatively regulates its interaction with the phosphatase, PPP1CC, thus creating a negative feedback loop for maintaining proper PLK1 kinase activity during mitosis. In complex with FIGL1 may regulate homologous recombination. The polypeptide is FIGNL1-interacting regulator of recombination and mitosis (Rattus norvegicus (Rat)).